The chain runs to 304 residues: UDP-N-acetylenolpyruvoylglucosamine reductase (304 aa).

Positions 34–198 constitute an FAD-binding PCMH-type domain; sequence IGGKADFLVW…LEVVFALQPG (165 aa). Arginine 177 is a catalytic residue. Residue serine 227 is the Proton donor of the active site. The active site involves glutamate 297.

This sequence belongs to the MurB family. Requires FAD as cofactor.

It is found in the cytoplasm. The enzyme catalyses UDP-N-acetyl-alpha-D-muramate + NADP(+) = UDP-N-acetyl-3-O-(1-carboxyvinyl)-alpha-D-glucosamine + NADPH + H(+). Its pathway is cell wall biogenesis; peptidoglycan biosynthesis. In terms of biological role, cell wall formation. The polypeptide is UDP-N-acetylenolpyruvoylglucosamine reductase (Geobacillus thermodenitrificans (strain NG80-2)).